The primary structure comprises 184 residues: ATP synthase subunit b 1 (184 aa).

A helical membrane pass occupies residues 4 to 24; it reads LSILAALAASPAMAATGPFFS.

It belongs to the ATPase B chain family. F-type ATPases have 2 components, F(1) - the catalytic core - and F(0) - the membrane proton channel. F(1) has five subunits: alpha(3), beta(3), gamma(1), delta(1), epsilon(1). F(0) has three main subunits: a(1), b(2) and c(10-14). The alpha and beta chains form an alternating ring which encloses part of the gamma chain. F(1) is attached to F(0) by a central stalk formed by the gamma and epsilon chains, while a peripheral stalk is formed by the delta and b chains.

It is found in the cell inner membrane. Its function is as follows. F(1)F(0) ATP synthase produces ATP from ADP in the presence of a proton or sodium gradient. F-type ATPases consist of two structural domains, F(1) containing the extramembraneous catalytic core and F(0) containing the membrane proton channel, linked together by a central stalk and a peripheral stalk. During catalysis, ATP synthesis in the catalytic domain of F(1) is coupled via a rotary mechanism of the central stalk subunits to proton translocation. Functionally, component of the F(0) channel, it forms part of the peripheral stalk, linking F(1) to F(0). The polypeptide is ATP synthase subunit b 1 (Cereibacter sphaeroides (strain ATCC 17025 / ATH 2.4.3) (Rhodobacter sphaeroides)).